The sequence spans 204 residues: ATP phosphoribosyltransferase (204 aa).

Belongs to the ATP phosphoribosyltransferase family. Short subfamily. As to quaternary structure, heteromultimer composed of HisG and HisZ subunits.

Its subcellular location is the cytoplasm. The catalysed reaction is 1-(5-phospho-beta-D-ribosyl)-ATP + diphosphate = 5-phospho-alpha-D-ribose 1-diphosphate + ATP. The protein operates within amino-acid biosynthesis; L-histidine biosynthesis; L-histidine from 5-phospho-alpha-D-ribose 1-diphosphate: step 1/9. In terms of biological role, catalyzes the condensation of ATP and 5-phosphoribose 1-diphosphate to form N'-(5'-phosphoribosyl)-ATP (PR-ATP). Has a crucial role in the pathway because the rate of histidine biosynthesis seems to be controlled primarily by regulation of HisG enzymatic activity. In Staphylococcus aureus (strain MRSA252), this protein is ATP phosphoribosyltransferase.